Consider the following 856-residue polypeptide: Leucine--tRNA ligase (856 aa).

Residues 53-63 (PYPSGNLHMGH) carry the 'HIGH' region motif. Residues 622–626 (KMSKS) carry the 'KMSKS' region motif. Lys-625 is a binding site for ATP.

It belongs to the class-I aminoacyl-tRNA synthetase family.

It localises to the cytoplasm. The catalysed reaction is tRNA(Leu) + L-leucine + ATP = L-leucyl-tRNA(Leu) + AMP + diphosphate. This Prochlorococcus marinus (strain MIT 9312) protein is Leucine--tRNA ligase.